The following is a 459-amino-acid chain: D(1)-like dopamine receptor (459 aa).

The Extracellular segment spans residues 1–23 (MAQNFSTVGDGKQMLLERDSSKR). An N-linked (GlcNAc...) asparagine glycan is attached at asparagine 4. A helical membrane pass occupies residues 24 to 49 (VLTGCFLSLLIFTTLLGNTLVCVAVT). Over 50-60 (KFRHLRSKVTN) the chain is Cytoplasmic. A helical transmembrane segment spans residues 61 to 87 (FFVISLAISDLLVAILVMPWKAATEIM). The Extracellular portion of the chain corresponds to 88–96 (GFWPFGEFC). Cysteines 96 and 187 form a disulfide. Residues 97–119 (NIWVAFDIMCSTASILNLCVISV) traverse the membrane as a helical segment. The Cytoplasmic portion of the chain corresponds to 120-138 (DRYWAISSPFRYERKMTPK). A helical transmembrane segment spans residues 139–164 (VACLMISVAWTLSVLISFIPVQLNWH). The Extracellular segment spans residues 165-191 (KAQTASYVELNGTYAGDLPPDNCDSSL). The helical transmembrane segment at 192 to 216 (NRTYAISSSLISFYIPVAIMIVTYT) threads the bilayer. Residues 217–269 (RIYRIAQKQIRRISALERAAESAQNRHSSMGNSLSMESECSFKMSFKRETKVL) are Cytoplasmic-facing. Residues 270 to 297 (KTLSVIMGVFVCCWLPFFILNCMVPFCE) traverse the membrane as a helical segment. Residues 298 to 311 (ADDTTDFPCISSTT) are Extracellular-facing. A helical membrane pass occupies residues 312-333 (FDVFVWFGWANSSLNPIIYAFN). The Cytoplasmic segment spans residues 334–459 (ADFRKAFSIL…QNGQHKSMSC (126 aa)).

It belongs to the G-protein coupled receptor 1 family.

The protein localises to the cell membrane. The protein resides in the cell projection. Its subcellular location is the cilium membrane. Functionally, receptor for dopamine. The chain is D(1)-like dopamine receptor (d14) from Takifugu rubripes (Japanese pufferfish).